The sequence spans 217 residues: MSGLSESAKLVKEALEQRGLETPMRPNAVSREEKKEKIEHHMREILTLLQLDLTDDSLEETPHRIAKMYVDEIFSGLDYSNFPKITVIENKMNVSEMVRVKDITVTSTCEHHLVTIDGKAAVAYIPRGKIIGLSKINRIVRFFAQRPQVQERMTQQILVALQTLLESDDVAVTIDATHYCVKSRGVMDATSETTTTALGGIFKSNPATRAEFLHGLR.

3 residues coordinate Zn(2+): Cys-109, His-112, and Cys-180.

This sequence belongs to the GTP cyclohydrolase I family. In terms of assembly, toroid-shaped homodecamer, composed of two pentamers of five dimers.

The enzyme catalyses GTP + H2O = 7,8-dihydroneopterin 3'-triphosphate + formate + H(+). It functions in the pathway cofactor biosynthesis; 7,8-dihydroneopterin triphosphate biosynthesis; 7,8-dihydroneopterin triphosphate from GTP: step 1/1. This is GTP cyclohydrolase 1 from Vibrio parahaemolyticus serotype O3:K6 (strain RIMD 2210633).